The sequence spans 948 residues: Valine--tRNA ligase (948 aa).

Residues 40–50 (PNVTGSLHMGH) carry the 'HIGH' region motif. The 'KMSKS' region signature appears at 551–555 (KMSKS). Lysine 554 provides a ligand contact to ATP. Positions 879 to 945 (LIDKGAELAR…GKLAEQHARI (67 aa)) form a coiled coil.

This sequence belongs to the class-I aminoacyl-tRNA synthetase family. ValS type 1 subfamily. In terms of assembly, monomer.

The protein resides in the cytoplasm. It carries out the reaction tRNA(Val) + L-valine + ATP = L-valyl-tRNA(Val) + AMP + diphosphate. Functionally, catalyzes the attachment of valine to tRNA(Val). As ValRS can inadvertently accommodate and process structurally similar amino acids such as threonine, to avoid such errors, it has a 'posttransfer' editing activity that hydrolyzes mischarged Thr-tRNA(Val) in a tRNA-dependent manner. The protein is Valine--tRNA ligase of Pseudomonas syringae pv. tomato (strain ATCC BAA-871 / DC3000).